A 248-amino-acid chain; its full sequence is MTETVLVIGATGHIGVSAVIGALRTKRNVLAVVRNAAAVDKLFRLAGTRDGITTVEADITSEHGLQSVVDKVKNGELPAFQHVYSAVGGVKTTTPLKDLSIEDFRANMSINFDTNFFAYRATIGYLLSQSNPTTYTVITGAIGDVGIWPGPAMSQGALYSLGISAELENRDTNVRFNEMYLAFPVMVDEEAVKEEAAKMGVVKASDFARSYENLLAKDEIKGSRIFIFTPGDIDTLRWESKAFKGPPS.

Residues Ile-14, Asn-35, Lys-41, Asp-58, Arg-120, and Val-187 each contribute to the NADP(+) site.

It belongs to the short-chain dehydrogenases/reductases (SDR) family.

The protein operates within secondary metabolite biosynthesis. Functionally, short-chain dehydrogenase/reductase; part of the gene cluster that mediates the biosynthesis of iso-A82775C, a enylepoxycyclohexane and biosynthetic precursor of the chloropestolide anticancer natural products. Within the cluster, the prenyltransferase iacE prenylates siccayne to generate pestalodiol E, using dimethylallyl diphosphate (DMAPP) as cosubstrate. The probable oxidoreductase iacF is then involved in the epoxidation of pestalodiol F to pestalodiol F, which is further converted to pestalofone A by the short-chain dehydrogenase/reductase iacG. Iso-A82775C is subsequently generated from pestalofone A by the short-chain dehydrogenase/reductase iacC. Iso-A82775C is further condensed with maldoxin via a Diels-Alder reaction to produce the anticancer natural products chloropestolides A to E. The chain is Short-chain dehydrogenase/reductase iacG from Pestalotiopsis fici (strain W106-1 / CGMCC3.15140).